A 503-amino-acid chain; its full sequence is Adenosine deaminase 2-A (503 aa).

The signal sequence occupies residues 1-24; that stretch reads MHVLFLGDLMWIYLLLLCCASCNG. Zn(2+) contacts are provided by His-105 and His-107. Asp-108 provides a ligand contact to substrate. The N-linked (GlcNAc...) asparagine glycan is linked to Asn-120. Cys-130 and Cys-152 form a disulfide bridge. Asn-167 and Asn-178 each carry an N-linked (GlcNAc...) asparagine glycan. Substrate is bound by residues 197–204 and His-286; that span reads WERFEQVF. N-linked (GlcNAc...) asparagine glycosylation occurs at Asn-290. Gly-319 lines the substrate pocket. Zn(2+) is bound at residue His-349. Residue Glu-352 is the Proton donor of the active site. Asn-371 is a glycosylation site (N-linked (GlcNAc...) asparagine). His-377 functions as the Proton acceptor in the catalytic mechanism. Residue Asp-434 coordinates Zn(2+). Substrate is bound at residue Asp-435.

Belongs to the metallo-dependent hydrolases superfamily. Adenosine and AMP deaminases family. ADGF subfamily. Requires Zn(2+) as cofactor.

Its subcellular location is the secreted. The enzyme catalyses adenosine + H2O + H(+) = inosine + NH4(+). Functionally, adenosine deaminase that may contribute to the degradation of extracellular adenosine, a signaling molecule that controls a variety of cellular responses. May play a role in the regulation of cell proliferation. In Danio rerio (Zebrafish), this protein is Adenosine deaminase 2-A.